Consider the following 633-residue polypeptide: NADPH-dependent diflavin oxidoreductase 1 (633 aa).

Residues 5–149 enclose the Flavodoxin-like domain; that stretch reads CTIIYATESG…EVEKWSQELI (145 aa). FMN contacts are provided by residues 11–16, 58–61, and D131; these read TESGTS and STTG. The FAD-binding FR-type domain occupies 196-442; that stretch reads TQFYKSKLKV…FIKESGARLP (247 aa). Residues 377 to 380 and 412 to 415 each bind FAD; these read RPFS and GLCS. Residues T456, 520 to 521, 528 to 532, and D565 contribute to the NADP(+) site; these read SR and KVYVQ. The disordered stretch occupies residues 580–610; that stretch reads KNNNNNNNNNNNNNNNNNNNNNNNNNDDENN. The span at 581–604 shows a compositional bias: low complexity; it reads NNNNNNNNNNNNNNNNNNNNNNNN. Position 633 (W633) interacts with FAD.

Belongs to the NADPH-dependent diflavin oxidoreductase NDOR1 family. This sequence in the N-terminal section; belongs to the flavodoxin family. It in the C-terminal section; belongs to the flavoprotein pyridine nucleotide cytochrome reductase family. It depends on FAD as a cofactor. FMN is required as a cofactor.

The protein resides in the cytoplasm. It carries out the reaction 2 oxidized [2Fe-2S]-[protein] + NADPH = 2 reduced [2Fe-2S]-[protein] + NADP(+) + H(+). Functionally, NADPH-dependent reductase which is a central component of the cytosolic iron-sulfur (Fe-S) protein assembly (CIA) machinery. Transfers electrons from NADPH via its FAD and FMN prosthetic groups to the [2Fe-2S] cluster of the anamorsin/DRE2 homolog, another key component of the CIA machinery. In turn, this reduced cluster provides electrons for assembly of cytosolic iron-sulfur cluster proteins. This Dictyostelium discoideum (Social amoeba) protein is NADPH-dependent diflavin oxidoreductase 1 (redC).